A 194-amino-acid polypeptide reads, in one-letter code: Ribonuclease HII (194 aa).

The 191-residue stretch at 3–193 folds into the RNase H type-2 domain; the sequence is ILTAGVDEAG…VRNLLAQQAL (191 aa). A divalent metal cation is bound by residues Asp9, Glu10, and Asp101.

Belongs to the RNase HII family. The cofactor is Mn(2+). Requires Mg(2+) as cofactor.

It is found in the cytoplasm. The enzyme catalyses Endonucleolytic cleavage to 5'-phosphomonoester.. Endonuclease that specifically degrades the RNA of RNA-DNA hybrids. The chain is Ribonuclease HII (rnhB) from Neisseria meningitidis serogroup B (strain ATCC BAA-335 / MC58).